The following is a 233-amino-acid chain: Cell surface glycoprotein gp42 (233 aa).

Residues 1-16 (MLLWMVLLLCVSMTEA) form the signal peptide. 2 consecutive Ig-like domains span residues 23-98 (PVLS…GTIQ) and 115-195 (PVLT…RDIS). Residues Asn29, Asn66, and Asn181 are each glycosylated (N-linked (GlcNAc...) asparagine). Cystine bridges form between Cys40-Cys88 and Cys136-Cys184. The GPI-anchor amidated glycine moiety is linked to residue Gly206. Residues 207–233 (TASMKSTTVVIWLPVSCLVGWPWLLRF) constitute a propeptide, removed in mature form.

In terms of tissue distribution, NK cells.

It localises to the cell membrane. The chain is Cell surface glycoprotein gp42 from Rattus norvegicus (Rat).